Consider the following 253-residue polypeptide: MVSSSTTVPRSGVYYFSQGWKLVTLPGIRRFVILPLLVNIVLMGGAFWWLFTQLDAWIPSLMSHVPDWLQWLSYLLWPIAVISVLLVFGYFFSTLANWIAAPFNGLLAEQLEARLTGATPPDTGILGIMKDVPRIMKREWQKLAWYLPRAIVLLILYFIPGIGQTIAPVLWFLFSAWMLAIQYCDYPFDNHKVPFKTMRAALRTQKVANMQFGALTSLFTMIPVLNLFIMPVAVCGATAMWVDCWRAKHALWK.

A run of 4 helical transmembrane segments spans residues 31–51, 72–92, 151–171, and 222–242; these read FVIL…WWLF, LSYL…GYFF, IVLL…PVLW, and IPVL…AMWV.

Belongs to the CysZ family.

It is found in the cell inner membrane. Functionally, possibly involved in sulfate transport. High affinity, high specificity proton-dependent sulfate transporter, which mediates sulfate uptake. Provides the sulfur source for the cysteine synthesis pathway. This Salmonella typhimurium (strain LT2 / SGSC1412 / ATCC 700720) protein is Sulfate transporter CysZ.